The chain runs to 218 residues: Flagellar calcium-binding protein TB-24 (218 aa).

The disordered stretch occupies residues 1-27 (MGCSASKDTTNSKDGAASKGGKDGKTT). 4 consecutive EF-hand domains span residues 48–83 (ESKS…ILKL), 84–119 (DEFT…LVEF), 130–165 (YDIF…LKEW), and 167–202 (VDIT…KKLQ). 5 residues coordinate Ca(2+): Asp-61, Asn-63, Thr-65, Lys-67, and Glu-72. Ca(2+)-binding residues include Asp-143, Asp-145, Ser-147, Glu-154, Asp-180, Asn-182, Ser-184, and Glu-191.

The protein belongs to the calflagin family.

The protein localises to the cell projection. It is found in the cilium. Its subcellular location is the flagellum. In terms of biological role, may contribute to the rapid motility of the trypanosomes, playing a role either in flagellar structure or in calcium metabolism. Could alternate between a GDP-bound inactive form to a calcium/GTP-bound active form. The polypeptide is Flagellar calcium-binding protein TB-24 (Trypanosoma brucei brucei).